The chain runs to 638 residues: 3D-(3,5/4)-trihydroxycyclohexane-1,2-dione hydrolase (638 aa).

Residue glutamate 67 coordinates thiamine diphosphate. The thiamine pyrophosphate binding stretch occupies residues 442–523 (SLPGDLQRLW…INIMLFDNSG (82 aa)). Residues aspartate 494 and asparagine 521 each coordinate Mg(2+).

Belongs to the TPP enzyme family. Requires Mg(2+) as cofactor. It depends on thiamine diphosphate as a cofactor.

The catalysed reaction is 3D-3,5/4-trihydroxycyclohexane-1,2-dione + H2O = 5-deoxy-D-glucuronate + H(+). It functions in the pathway polyol metabolism; myo-inositol degradation into acetyl-CoA; acetyl-CoA from myo-inositol: step 3/7. Functionally, involved in the cleavage of the C1-C2 bond of 3D-(3,5/4)-trihydroxycyclohexane-1,2-dione (THcHDO) to yield 5-deoxy-glucuronate (5DG). This chain is 3D-(3,5/4)-trihydroxycyclohexane-1,2-dione hydrolase, found in Listeria monocytogenes serovar 1/2a (strain ATCC BAA-679 / EGD-e).